The sequence spans 1162 residues: Sialidase (1162 aa).

BNR repeat units follow at residues 23-34 (KYSVDDGETWET), 163-174 (FYSEDDGKTWKF), and 209-220 (YESSDMEKPWVE). Asn-342 and Asn-394 each carry an N-linked (GlcNAc...) asparagine glycan. The tract at residues 587 to 1123 (HMDSSSDSSA…STPSTPAGSS (537 aa)) is disordered. Positions 589 to 615 (DSSSDSSAHSTPSTPADSSAHSTPSTP) are enriched in low complexity. The 44 X 12 AA tandem repeats, LTR domain stretch occupies residues 589 to 1120 (DSSSDSSAHS…SAHSTPSTPA (532 aa)). 2 stretches are compositionally biased toward polar residues: residues 616–689 (VDSS…TPVD) and 699–1123 (PADS…AGSS). Asn-1125 carries N-linked (GlcNAc...) asparagine glycosylation.

It belongs to the glycosyl hydrolase 33 family.

The protein localises to the cell membrane. The enzyme catalyses Hydrolysis of alpha-(2-&gt;3)-, alpha-(2-&gt;6)-, alpha-(2-&gt;8)- glycosidic linkages of terminal sialic acid residues in oligosaccharides, glycoproteins, glycolipids, colominic acid and synthetic substrates.. Its function is as follows. Developmentally regulated neuraminidase implicated in parasite invasion of cells. The sequence is that of Sialidase (TCNA) from Trypanosoma cruzi.